The sequence spans 125 residues: Large ribosomal subunit protein bL12 (125 aa).

The protein belongs to the bacterial ribosomal protein bL12 family. As to quaternary structure, homodimer. Part of the ribosomal stalk of the 50S ribosomal subunit. Forms a multimeric L10(L12)X complex, where L10 forms an elongated spine to which 2 to 4 L12 dimers bind in a sequential fashion. Binds GTP-bound translation factors.

In terms of biological role, forms part of the ribosomal stalk which helps the ribosome interact with GTP-bound translation factors. Is thus essential for accurate translation. This is Large ribosomal subunit protein bL12 from Paraburkholderia phymatum (strain DSM 17167 / CIP 108236 / LMG 21445 / STM815) (Burkholderia phymatum).